We begin with the raw amino-acid sequence, 155 residues long: Mediator of RNA polymerase II transcription subunit 10 (155 aa).

The tract at residues 54–80 (SSHTQSHAPDADTAQANPSDPPISTIE) is disordered.

Belongs to the Mediator complex subunit 10 family. Component of the Mediator complex.

The protein localises to the nucleus. Component of the Mediator complex, a coactivator involved in the regulated transcription of nearly all RNA polymerase II-dependent genes. Mediator functions as a bridge to convey information from gene-specific regulatory proteins to the basal RNA polymerase II transcription machinery. Mediator is recruited to promoters by direct interactions with regulatory proteins and serves as a scaffold for the assembly of a functional preinitiation complex with RNA polymerase II and the general transcription factors. This Aspergillus terreus (strain NIH 2624 / FGSC A1156) protein is Mediator of RNA polymerase II transcription subunit 10 (nut2).